We begin with the raw amino-acid sequence, 703 residues long: Arylphorin subunit beta (703 aa).

An N-terminal signal peptide occupies residues 1 to 16; that stretch reads MKTVIILAGLVALALG. N-linked (GlcNAc...) asparagine glycosylation is found at Asn72 and Asn211.

This sequence belongs to the hemocyanin family. In terms of assembly, arylphorin is a hexamer of subunits alpha and beta. As to expression, fat body.

The protein localises to the secreted. It is found in the extracellular space. In terms of biological role, arylphorin is a larval storage protein (LSP) which may serve as a storage protein used primarily as a source of aromatic amino acids for protein synthesis during metamorphosis. It is a constituent of the sclerotizing system of the cuticle, and serves as a carrier for ecdysteroid hormone. The polypeptide is Arylphorin subunit beta (Manduca sexta (Tobacco hawkmoth)).